Reading from the N-terminus, the 292-residue chain is MFTGSIVAIVTPMDEKGNVCRASLKKLIDYHVASGTSAIVSVGTTGESATLNHDEHADVVMMTLDLADGRIPVIAGTGANATAEAISLTQRFNDSGIVGCLTVTPYYNRPSQEGLYQHFKAIAEHTDLPQILYNVPSRTGCDLLPETVGRLAKVKNIIGIKEATGNLTRVNQIKELVSDDFVLLSGDDASALDFMQLGGHGVISVTANVAARDMAQMCKLAAEGHFAEARVINQRLMPLHNKLFVEPNPIPVKWACKELGLVATDTLRLPMTPITDSGRETVRAALKHAGLL.

Threonine 45 lines the pyruvate pocket. Tyrosine 133 serves as the catalytic Proton donor/acceptor. Lysine 161 acts as the Schiff-base intermediate with substrate in catalysis. Isoleucine 203 is a binding site for pyruvate.

The protein belongs to the DapA family. Homotetramer; dimer of dimers.

The protein resides in the cytoplasm. The catalysed reaction is L-aspartate 4-semialdehyde + pyruvate = (2S,4S)-4-hydroxy-2,3,4,5-tetrahydrodipicolinate + H2O + H(+). It participates in amino-acid biosynthesis; L-lysine biosynthesis via DAP pathway; (S)-tetrahydrodipicolinate from L-aspartate: step 3/4. In terms of biological role, catalyzes the condensation of (S)-aspartate-beta-semialdehyde [(S)-ASA] and pyruvate to 4-hydroxy-tetrahydrodipicolinate (HTPA). The sequence is that of 4-hydroxy-tetrahydrodipicolinate synthase from Shigella flexneri.